Here is a 138-residue protein sequence, read N- to C-terminus: Aspartate 1-decarboxylase (138 aa).

S25 acts as the Schiff-base intermediate with substrate; via pyruvic acid in catalysis. S25 carries the post-translational modification Pyruvic acid (Ser). Residue T57 participates in substrate binding. The active-site Proton donor is the Y58. A substrate-binding site is contributed by 73–75; the sequence is GAA. Positions 117-138 are disordered; it reads VDADPTAPPAPGLERSPLAEPV.

This sequence belongs to the PanD family. In terms of assembly, heterooctamer of four alpha and four beta subunits. Pyruvate is required as a cofactor. In terms of processing, is synthesized initially as an inactive proenzyme, which is activated by self-cleavage at a specific serine bond to produce a beta-subunit with a hydroxyl group at its C-terminus and an alpha-subunit with a pyruvoyl group at its N-terminus.

The protein resides in the cytoplasm. It catalyses the reaction L-aspartate + H(+) = beta-alanine + CO2. The protein operates within cofactor biosynthesis; (R)-pantothenate biosynthesis; beta-alanine from L-aspartate: step 1/1. Catalyzes the pyruvoyl-dependent decarboxylation of aspartate to produce beta-alanine. The chain is Aspartate 1-decarboxylase from Clavibacter michiganensis subsp. michiganensis (strain NCPPB 382).